An 85-amino-acid chain; its full sequence is Small integral membrane protein 35 (85 aa).

The chain crosses the membrane as a helical span at residues 7-27; the sequence is ISTLGMILGVGLSLLLVSILG.

The protein localises to the membrane. The sequence is that of Small integral membrane protein 35 from Mus musculus (Mouse).